Consider the following 196-residue polypeptide: NAD(P)H-quinone oxidoreductase subunit I (196 aa).

2 consecutive 4Fe-4S ferredoxin-type domains span residues 55–84 (GRIH…VDWE) and 95–124 (KHYS…MTEE). Positions 64, 67, 70, 74, 104, 107, 110, and 114 each coordinate [4Fe-4S] cluster. Residues 170–196 (SPHDLPEGSQRSGKRPEEIIEEAEASS) form a disordered region.

The protein belongs to the complex I 23 kDa subunit family. In terms of assembly, NDH-1 is composed of at least 11 different subunits. Requires [4Fe-4S] cluster as cofactor.

Its subcellular location is the cellular thylakoid membrane. The catalysed reaction is a plastoquinone + NADH + (n+1) H(+)(in) = a plastoquinol + NAD(+) + n H(+)(out). It catalyses the reaction a plastoquinone + NADPH + (n+1) H(+)(in) = a plastoquinol + NADP(+) + n H(+)(out). Functionally, NDH-1 shuttles electrons from an unknown electron donor, via FMN and iron-sulfur (Fe-S) centers, to quinones in the respiratory and/or the photosynthetic chain. The immediate electron acceptor for the enzyme in this species is believed to be plastoquinone. Couples the redox reaction to proton translocation, and thus conserves the redox energy in a proton gradient. The sequence is that of NAD(P)H-quinone oxidoreductase subunit I from Crocosphaera subtropica (strain ATCC 51142 / BH68) (Cyanothece sp. (strain ATCC 51142)).